The sequence spans 259 residues: 4-hydroxy-tetrahydrodipicolinate reductase (259 aa).

Residues 9–14 (GAGGRM) and Glu35 contribute to the NAD(+) site. Arg36 serves as a coordination point for NADP(+). NAD(+) contacts are provided by residues 92–94 (GTT) and 116–119 (APNM). His149 serves as the catalytic Proton donor/acceptor. A (S)-2,3,4,5-tetrahydrodipicolinate-binding site is contributed by His150. Lys153 functions as the Proton donor in the catalytic mechanism. 159-160 (GT) serves as a coordination point for (S)-2,3,4,5-tetrahydrodipicolinate.

It belongs to the DapB family.

The protein localises to the cytoplasm. The catalysed reaction is (S)-2,3,4,5-tetrahydrodipicolinate + NAD(+) + H2O = (2S,4S)-4-hydroxy-2,3,4,5-tetrahydrodipicolinate + NADH + H(+). The enzyme catalyses (S)-2,3,4,5-tetrahydrodipicolinate + NADP(+) + H2O = (2S,4S)-4-hydroxy-2,3,4,5-tetrahydrodipicolinate + NADPH + H(+). Its pathway is amino-acid biosynthesis; L-lysine biosynthesis via DAP pathway; (S)-tetrahydrodipicolinate from L-aspartate: step 4/4. In terms of biological role, catalyzes the conversion of 4-hydroxy-tetrahydrodipicolinate (HTPA) to tetrahydrodipicolinate. The sequence is that of 4-hydroxy-tetrahydrodipicolinate reductase from Nitratidesulfovibrio vulgaris (strain DP4) (Desulfovibrio vulgaris).